We begin with the raw amino-acid sequence, 782 residues long: Coiled-coil alpha-helical rod protein 1 (782 aa).

Composition is skewed to basic and acidic residues over residues 62 to 74 (ERDV…EPGR) and 208 to 218 (ETRRAGEAKEL). Disordered regions lie at residues 62–82 (ERDV…WGLE) and 185–218 (AHKE…AKEL). 3 coiled-coil regions span residues 82–314 (EGSQ…ELTR), 344–398 (LMVQ…EVER), and 498–691 (VTDV…QQEG).

The protein localises to the cytoplasm. Its subcellular location is the nucleus. Functionally, may be a regulator of keratinocyte proliferation or differentiation. The polypeptide is Coiled-coil alpha-helical rod protein 1 (CCHCR1) (Gorilla gorilla gorilla (Western lowland gorilla)).